Consider the following 319-residue polypeptide: Ribosomal RNA small subunit methyltransferase H (319 aa).

S-adenosyl-L-methionine-binding positions include Gly-39–His-41, Asp-59, Phe-83, Asp-104, and Gln-111.

Belongs to the methyltransferase superfamily. RsmH family.

The protein resides in the cytoplasm. It carries out the reaction cytidine(1402) in 16S rRNA + S-adenosyl-L-methionine = N(4)-methylcytidine(1402) in 16S rRNA + S-adenosyl-L-homocysteine + H(+). Functionally, specifically methylates the N4 position of cytidine in position 1402 (C1402) of 16S rRNA. This Ralstonia pickettii (strain 12D) protein is Ribosomal RNA small subunit methyltransferase H.